Here is a 95-residue protein sequence, read N- to C-terminus: Phosphoribosyl-ATP pyrophosphatase (95 aa).

The protein belongs to the PRA-PH family.

It is found in the cytoplasm. The enzyme catalyses 1-(5-phospho-beta-D-ribosyl)-ATP + H2O = 1-(5-phospho-beta-D-ribosyl)-5'-AMP + diphosphate + H(+). Its pathway is amino-acid biosynthesis; L-histidine biosynthesis; L-histidine from 5-phospho-alpha-D-ribose 1-diphosphate: step 2/9. In Sulfolobus acidocaldarius (strain ATCC 33909 / DSM 639 / JCM 8929 / NBRC 15157 / NCIMB 11770), this protein is Phosphoribosyl-ATP pyrophosphatase.